Consider the following 150-residue polypeptide: Protein A151R (150 aa).

The protein belongs to the asfivirus A151R family. Monomer. Homodimer. Interacts with protein B119L. Interacts with membrane protein E248R. It depends on Zn(2+) as a cofactor.

Its function is as follows. May participate in a redox cascade for the formation of disulfide bonds in viral proteins. This African swine fever virus (isolate Pig/Kenya/KEN-50/1950) (ASFV) protein is Protein A151R.